The primary structure comprises 447 residues: 3-O-methyltransferase 2 (447 aa).

S-adenosyl-L-methionine contacts are provided by residues 264 to 265 (GG), Asp287, 318 to 319 (DF), and Arg334. His338 (proton acceptor) is an active-site residue.

This sequence belongs to the class I-like SAM-binding methyltransferase superfamily. Cation-independent O-methyltransferase family. COMT subfamily.

In terms of biological role, S-adenosyl-L-methionine-dependent methyltransferase that preferentially catalyzes the methylation of 3-OH phenolic compounds like isovanillic acid and 3-OH-4-Met cinnamic acid. May play a role in promoting lignin degradation by methylating and inactivating free-hydroxyl phenolic compounds, products of lignin cleavage which are known inhibitors of lignin peroxidases. This chain is 3-O-methyltransferase 2, found in Phanerochaete chrysosporium (strain RP-78 / ATCC MYA-4764 / FGSC 9002) (White-rot fungus).